A 228-amino-acid chain; its full sequence is Eukaryotic translation initiation factor 4E-1 (228 aa).

2 EIF4G-binding regions span residues 53–56 (HLLE) and 63–99 (FDTP…NNIH). Residues 71 to 76 (KQDDWG), K103, and 121 to 122 (WE) each bind mRNA. The cysteines at positions 126 and 164 are disulfide-linked. The segment at 147–156 (YTLLAMIGEQ) is EIF4G-binding. MRNA is bound by residues 171–176 (RGRAEK) and 216–220 (RKLDR).

It belongs to the eukaryotic initiation factor 4E family. EIF4F is a multi-subunit complex, the composition of which varies with external and internal environmental conditions. It is composed of at least EIF4A, EIF4E and EIF4G. EIF4E is also known to interact with other partners. In higher plants two isoforms of EIF4F have been identified, named isoform EIF4F and isoform EIF(iso)4F. Isoform EIF4F has subunits p220 and p26, whereas isoform EIF(iso)4F has subunits p82 and p28. In terms of assembly, (Microbial infection) Interacts with potyvirus viral genome-linked protein (VPg); this interaction is possible in susceptible hosts but impaired in resistant plants. In terms of processing, according to the redox status, the Cys-126-Cys-164 disulfide bridge may have a role in regulating protein function by affecting its ability to bind capped mRNA.

The protein resides in the nucleus. It is found in the cytoplasm. Component of the protein complex eIF4F, which is involved in the recognition of the mRNA cap, ATP-dependent unwinding of 5'-terminal secondary structure and recruitment of mRNA to the ribosome. Recognizes and binds the 7-methylguanosine-containing mRNA cap during an early step in the initiation of protein synthesis and facilitates ribosome binding by inducing the unwinding of the mRNAs secondary structures. Key component of recessive resistance to potyviruses. In terms of biological role, (Microbial infection) Susceptibility host factor required for viral infection by recruiting viral RNAs to the host ribosomal complex via an interaction with viral genome-linked protein (VPg). Also seems to be involved in virus movement from cell-to-cell. The sequence is that of Eukaryotic translation initiation factor 4E-1 from Pisum sativum (Garden pea).